Consider the following 275-residue polypeptide: Large ribosomal subunit protein uL2c (275 aa).

The segment at 223-255 (VVMNPVDHPHGGGEGRAPIGRSRPVTPWGRPAL) is disordered.

It belongs to the universal ribosomal protein uL2 family. As to quaternary structure, part of the 50S ribosomal subunit.

The protein resides in the plastid. Its subcellular location is the chloroplast. This is Large ribosomal subunit protein uL2c (rpl2) from Pleurastrum terricola (Filamentous green alga).